The sequence spans 62 residues: Metallothionein-like protein 3A (62 aa).

Belongs to the metallothionein superfamily. Type 15 family.

Functionally, metallothioneins have a high content of cysteine residues that bind various heavy metals. This Oryza sativa subsp. indica (Rice) protein is Metallothionein-like protein 3A (MT3A).